A 400-amino-acid chain; its full sequence is D(3) dopamine receptor (400 aa).

Over 1 to 32 (MAPLSQLSGHLNYTCGVENSTGASQARPHAYY) the chain is Extracellular. N-linked (GlcNAc...) asparagine glycosylation is found at Asn12 and Asn19. Residues 33 to 55 (ALSYCALILAIVFGNGLVCMAVL) traverse the membrane as a helical segment. At 56 to 65 (KERALQTTTN) the chain is on the cytoplasmic side. Residues 66-88 (YLVVSLAVADLLVATLVMPWVVY) form a helical membrane-spanning segment. The Extracellular segment spans residues 89–104 (LEVTGGVWNFSRVCCD). Asn97 carries N-linked (GlcNAc...) asparagine glycosylation. Cys103 and Cys181 form a disulfide bridge. The helical transmembrane segment at 105 to 126 (VFVTLDVMMCTASILNLCAISI) threads the bilayer. At 127-149 (DRYTAVVMPVHYQHGTGQSSCRR) the chain is on the cytoplasmic side. The chain crosses the membrane as a helical span at residues 150 to 170 (VTLMITAVWVLAFAVSCPLLF). Residues 171-187 (GFNTTGDPTVCSISNPD) are Extracellular-facing. Asn173 carries N-linked (GlcNAc...) asparagine glycosylation. The chain crosses the membrane as a helical span at residues 188-209 (FVIYSSVVSFYLPFGVTVLVYA). Residues 210-329 (RIYVVLKQRR…VPLREKKATQ (120 aa)) lie on the Cytoplasmic side of the membrane. The chain crosses the membrane as a helical span at residues 330-351 (MVAIVLGAFIVCWLPFFLTHVL). Residues 352 to 366 (NTHCQTCHVSPELYS) are Extracellular-facing. Cys355 and Cys358 are oxidised to a cystine. Residues 367–386 (ATTWLGYVNSALNPVIYTTF) traverse the membrane as a helical segment. The Cytoplasmic portion of the chain corresponds to 387–400 (NIEFRKAFLKILSC).

The protein belongs to the G-protein coupled receptor 1 family. In terms of assembly, interacts with CLIC6. Interacts with GRK4. Interacts with PALM. Interacts with FLNA (via filamin repeat 21); increases PKA-mediated phosphorylation of FLNA. Post-translationally, phosphorylated by GRK4. Palmitoylated.

Its subcellular location is the cell membrane. Its function is as follows. Dopamine receptor whose activity is mediated by G proteins which inhibit adenylyl cyclase. Promotes cell proliferation. The protein is D(3) dopamine receptor (DRD3) of Chlorocebus aethiops (Green monkey).